We begin with the raw amino-acid sequence, 224 residues long: Elongation factor 1-beta 2 (224 aa).

Alanine 2 bears the N-acetylalanine mark. The 52-residue stretch at 14–65 (VKSVEEHLAGKTYISGDQLSVDDVKVYAAVPVKPSDAFPNASKWYESVASQL) folds into the GST C-terminal domain. Residues 89-139 (EAEAPAAAADDDDDMDLFGDETEEEKKAAEEREAAKKDTKKPKESGKSSVL) are disordered. Residues 97–111 (ADDDDDMDLFGDETE) show a composition bias toward acidic residues. Positions 112–134 (EEKKAAEEREAAKKDTKKPKESG) are enriched in basic and acidic residues.

Belongs to the EF-1-beta/EF-1-delta family. In terms of assembly, EF-1 is composed of 4 subunits: alpha, beta (1B-alpha=beta'), delta (1B-beta), and gamma (1B-gamma).

Its function is as follows. EF-1-beta and EF-1-delta stimulate the exchange of GDP bound to EF-1-alpha to GTP. The sequence is that of Elongation factor 1-beta 2 from Arabidopsis thaliana (Mouse-ear cress).